The sequence spans 298 residues: Small ribosomal subunit protein uS2 (298 aa).

Basic and acidic residues-rich tracts occupy residues 237 to 259 (QSKE…DGQK) and 280 to 298 (PKSE…ENKG). The segment at 237–298 (QSKELDDKAD…DAAKLPENKG (62 aa)) is disordered.

Belongs to the universal ribosomal protein uS2 family.

This is Small ribosomal subunit protein uS2 from Neorickettsia sennetsu (strain ATCC VR-367 / Miyayama) (Ehrlichia sennetsu).